Here is a 473-residue protein sequence, read N- to C-terminus: Mannose-1-phosphate guanylyltransferase (473 aa).

Belongs to the mannose-6-phosphate isomerase type 2 family. In terms of assembly, homodimer.

The enzyme catalyses alpha-D-mannose 1-phosphate + GTP + H(+) = GDP-alpha-D-mannose + diphosphate. It participates in nucleotide-sugar biosynthesis; GDP-alpha-D-mannose biosynthesis; GDP-alpha-D-mannose from alpha-D-mannose 1-phosphate (GTP route): step 1/1. It functions in the pathway bacterial outer membrane biogenesis; LPS O-antigen biosynthesis. Involved in GDP-mannose biosynthesis which serves as the activated sugar nucleotide precursor for mannose residues in cell surface polysaccharides. This enzyme participates in synthesis of the LPS group C2 O antigen. The sequence is that of Mannose-1-phosphate guanylyltransferase (rfbM) from Salmonella muenchen.